Here is a 310-residue protein sequence, read N- to C-terminus: Ribose-phosphate pyrophosphokinase (310 aa).

ATP is bound by residues 34–36 (DGE) and 93–94 (RQ). Mg(2+)-binding residues include His-127 and Asp-167. Residue Lys-190 is part of the active site. D-ribose 5-phosphate is bound by residues Arg-192, Asp-216, and 220–224 (DSGGT).

This sequence belongs to the ribose-phosphate pyrophosphokinase family. Class I subfamily. Homohexamer. The cofactor is Mg(2+).

It localises to the cytoplasm. It catalyses the reaction D-ribose 5-phosphate + ATP = 5-phospho-alpha-D-ribose 1-diphosphate + AMP + H(+). It participates in metabolic intermediate biosynthesis; 5-phospho-alpha-D-ribose 1-diphosphate biosynthesis; 5-phospho-alpha-D-ribose 1-diphosphate from D-ribose 5-phosphate (route I): step 1/1. Functionally, involved in the biosynthesis of the central metabolite phospho-alpha-D-ribosyl-1-pyrophosphate (PRPP) via the transfer of pyrophosphoryl group from ATP to 1-hydroxyl of ribose-5-phosphate (Rib-5-P). The sequence is that of Ribose-phosphate pyrophosphokinase from Maricaulis maris (strain MCS10) (Caulobacter maris).